We begin with the raw amino-acid sequence, 152 residues long: Lipoprotein signal peptidase (152 aa).

Helical transmembrane passes span 5–25 (LFVL…FWIV), 61–81 (WFFV…LATH), and 84–104 (LNIW…GNFI). Residues aspartate 114 and aspartate 130 contribute to the active site. A helical membrane pass occupies residues 125 to 145 (IFNVADSYLTVGVILLVICLW).

This sequence belongs to the peptidase A8 family.

It is found in the cell membrane. The enzyme catalyses Release of signal peptides from bacterial membrane prolipoproteins. Hydrolyzes -Xaa-Yaa-Zaa-|-(S,diacylglyceryl)Cys-, in which Xaa is hydrophobic (preferably Leu), and Yaa (Ala or Ser) and Zaa (Gly or Ala) have small, neutral side chains.. The protein operates within protein modification; lipoprotein biosynthesis (signal peptide cleavage). In terms of biological role, this protein specifically catalyzes the removal of signal peptides from prolipoproteins. The sequence is that of Lipoprotein signal peptidase from Streptococcus pyogenes serotype M18 (strain MGAS8232).